Consider the following 258-residue polypeptide: Acetylglutamate kinase (258 aa).

Residues 41–42, arginine 63, and asparagine 156 contribute to the substrate site; that span reads GG.

The protein belongs to the acetylglutamate kinase family. ArgB subfamily.

The protein localises to the cytoplasm. It carries out the reaction N-acetyl-L-glutamate + ATP = N-acetyl-L-glutamyl 5-phosphate + ADP. The protein operates within amino-acid biosynthesis; L-arginine biosynthesis; N(2)-acetyl-L-ornithine from L-glutamate: step 2/4. In terms of biological role, catalyzes the ATP-dependent phosphorylation of N-acetyl-L-glutamate. In Bacillus pumilus (strain SAFR-032), this protein is Acetylglutamate kinase.